The following is a 383-amino-acid chain: ERCC4 domain-containing protein EP364R (383 aa).

The 99-residue stretch at 3-101 (FLVADHREHH…QLYFFVEGPA (99 aa)) folds into the ERCC4 domain. Residues 336 to 367 (LHKVSDEASENASHDASENASDKVSSPTGHQT) form a disordered region. Residues 347 to 356 (ASHDASENAS) are compositionally biased toward basic and acidic residues. Polar residues predominate over residues 357-367 (DKVSSPTGHQT).

The protein belongs to the asfivirus EP364R family.

In terms of biological role, plays a role in the inhibition of type I interferon signaling pathway. Mechanistically, specifically interacts with 2',3'-cGAMP and cleaves it via its phosphodiesterase activity. In turn, prevents 2',3'-cGAMP interaction with host ER-resident STING1 leading to inhibition of downstream signaling pathway and type I interferon production. The chain is ERCC4 domain-containing protein EP364R from Ornithodoros (relapsing fever ticks).